The sequence spans 462 residues: Hydroxymethylglutaryl-CoA synthase (462 aa).

Catalysis depends on glutamate 92, which acts as the Proton donor/acceptor. Cysteine 124 functions as the Acyl-thioester intermediate in the catalytic mechanism. Cysteine 124, threonine 167, serine 219, histidine 257, lysine 266, asparagine 327, and serine 360 together coordinate (3S)-3-hydroxy-3-methylglutaryl-CoA. The Proton donor/acceptor role is filled by histidine 257. Lysine 408 participates in a covalent cross-link: Glycyl lysine isopeptide (Lys-Gly) (interchain with G-Cter in SUMO).

Belongs to the thiolase-like superfamily. HMG-CoA synthase family. In terms of processing, ubiquitinated.

It carries out the reaction acetoacetyl-CoA + acetyl-CoA + H2O = (3S)-3-hydroxy-3-methylglutaryl-CoA + CoA + H(+). The protein operates within metabolic intermediate biosynthesis; (R)-mevalonate biosynthesis; (R)-mevalonate from acetyl-CoA: step 2/3. In terms of biological role, this enzyme condenses acetyl-CoA with acetoacetyl-CoA to form HMG-CoA, which is the substrate for HMG-CoA reductase. The polypeptide is Hydroxymethylglutaryl-CoA synthase (Caenorhabditis elegans).